A 437-amino-acid polypeptide reads, in one-letter code: Type II methyltransferase M.HgiBI (437 aa).

One can recognise an SAM-dependent MTase C5-type domain in the interval 4–431 (FRFIDLFAGI…KALQCVKLFE (428 aa)). Residue Cys-75 is part of the active site.

It belongs to the class I-like SAM-binding methyltransferase superfamily. C5-methyltransferase family.

It catalyses the reaction a 2'-deoxycytidine in DNA + S-adenosyl-L-methionine = a 5-methyl-2'-deoxycytidine in DNA + S-adenosyl-L-homocysteine + H(+). Functionally, a methylase that recognizes the double-stranded sequence 5'-GGWCC-3', methylates C-? on both strands, and protects the DNA from cleavage by the HgiBI endonuclease. This system is less active than isoschizomeric RM.HgiEI. This chain is Type II methyltransferase M.HgiBI, found in Herpetosiphon aurantiacus (Herpetosiphon giganteus).